The primary structure comprises 257 residues: Imidazole glycerol phosphate synthase subunit HisF (257 aa).

Residues aspartate 11 and aspartate 130 contribute to the active site.

It belongs to the HisA/HisF family. In terms of assembly, heterodimer of HisH and HisF.

The protein resides in the cytoplasm. It carries out the reaction 5-[(5-phospho-1-deoxy-D-ribulos-1-ylimino)methylamino]-1-(5-phospho-beta-D-ribosyl)imidazole-4-carboxamide + L-glutamine = D-erythro-1-(imidazol-4-yl)glycerol 3-phosphate + 5-amino-1-(5-phospho-beta-D-ribosyl)imidazole-4-carboxamide + L-glutamate + H(+). Its pathway is amino-acid biosynthesis; L-histidine biosynthesis; L-histidine from 5-phospho-alpha-D-ribose 1-diphosphate: step 5/9. Its function is as follows. IGPS catalyzes the conversion of PRFAR and glutamine to IGP, AICAR and glutamate. The HisF subunit catalyzes the cyclization activity that produces IGP and AICAR from PRFAR using the ammonia provided by the HisH subunit. The protein is Imidazole glycerol phosphate synthase subunit HisF of Shewanella sp. (strain MR-7).